A 470-amino-acid polypeptide reads, in one-letter code: UDP-glycosyltransferase 75C1 (470 aa).

His16 functions as the Proton acceptor in the catalytic mechanism. An anthocyanidin is bound at residue His16. 8 residues coordinate UDP-alpha-D-glucose: Gln347, His362, Trp365, Asn366, Ser367, Glu370, Asp386, and Gln387.

It belongs to the UDP-glycosyltransferase family. As to expression, expressed in flowers and fruits, especially in pulp, and, at lower levels, in seeds.

It is found in the cytoplasm. Its subcellular location is the nucleus. The enzyme catalyses 2-cis-(+)-abscisate + UDP-alpha-D-glucose = beta-D-glucopyranosyl cis-(+)-abscisate + UDP. The catalysed reaction is (indol-3-yl)acetate + UDP-alpha-D-glucose = 1-O-(indol-3-ylacetyl)-beta-D-glucose + UDP. Glucosyltransferase acting on both abscisic acid (ABA) and auxin (IAA). Required for ABA-mediated fruit ripening, seed germination, and negative responses to drought. This chain is UDP-glycosyltransferase 75C1, found in Solanum lycopersicum (Tomato).